The sequence spans 653 residues: ATP-dependent rRNA helicase SPB4 (653 aa).

Residues 17–45 carry the Q motif motif; the sequence is WQALTPPLSEWILDAVAAMGFTRMTPVQA. The Helicase ATP-binding domain maps to 48–257; that stretch reads IPLFMGHKDV…RVGLRNPVKI (210 aa). Residue 61–68 coordinates ATP; it reads AVTGSGKT. The DEAD box motif lies at 205–208; it reads DEAD. A Helicase C-terminal domain is found at 291–444; that stretch reads AIRQILNSID…SPPVALSDTL (154 aa). Residues 534–653 are disordered; sequence KQREKHRQES…DGESEFEGFD (120 aa). Polar residues predominate over residues 558 to 569; it reads PSSSSNNDTAPW. The stretch at 571-627 forms a coiled coil; sequence KTLEKKSDKEKRRERKRAKKEREHWEKMTEEEKTKSRETHQMLEELRKKNRQELNAK. 2 stretches are compositionally biased toward basic and acidic residues: residues 572 to 581 and 590 to 626; these read TLEKKSDKEK and KEREHWEKMTEEEKTKSRETHQMLEELRKKNRQELNA. Polar residues predominate over residues 627 to 636; it reads KSHTSSSVLS. Residues 641–653 show a composition bias toward acidic residues; sequence AELDGESEFEGFD.

Belongs to the DEAD box helicase family. DDX55/SPB4 subfamily. In terms of assembly, component of pre-60S ribosomal complexes.

It localises to the nucleus. The protein localises to the nucleolus. It catalyses the reaction ATP + H2O = ADP + phosphate + H(+). Its function is as follows. ATP-binding RNA helicase involved in the biogenesis of 60S ribosomal subunits. Binds 90S pre-ribosomal particles and dissociates from pre-60S ribosomal particles after processing of 27SB pre-rRNA. Required for the normal formation of 18S rRNA through the processing of pre-rRNAs at sites A0, A1 and A2, and the normal formation of 25S and 5.8S rRNAs through the processing of pre-rRNAs at sites C1 and C2. This Coccidioides immitis (strain RS) (Valley fever fungus) protein is ATP-dependent rRNA helicase SPB4.